Reading from the N-terminus, the 364-residue chain is Putative serine/threonine-protein phosphatase C06A1.3 (364 aa).

Residues 1–24 are disordered; sequence MSTDGNNNKKGSKEGPKSSEISKF. A compositionally biased stretch (basic and acidic residues) spans 11–24; the sequence is GSKEGPKSSEISKF. 4 residues coordinate Mn(2+): Asp-93, His-95, Asp-121, and Asn-153. His-154 functions as the Proton donor in the catalytic mechanism. Mn(2+)-binding residues include His-202 and His-277.

It belongs to the PPP phosphatase family. PP-1 subfamily. Requires Mn(2+) as cofactor.

It catalyses the reaction O-phospho-L-seryl-[protein] + H2O = L-seryl-[protein] + phosphate. The enzyme catalyses O-phospho-L-threonyl-[protein] + H2O = L-threonyl-[protein] + phosphate. In Caenorhabditis elegans, this protein is Putative serine/threonine-protein phosphatase C06A1.3.